The following is a 298-amino-acid chain: uncharacterized protein (298 aa).

Positions 1–19 (MFRKFLFIQLLIVTSLVKA) are cleaved as a signal peptide. A disordered region spans residues 278-298 (RNNPPLKNNNAKSKNSYETYK). A compositionally biased stretch (low complexity) spans 279 to 298 (NNPPLKNNNAKSKNSYETYK).

The protein to R.prowazekii RP296.

This is an uncharacterized protein from Rickettsia prowazekii (strain Madrid E).